Consider the following 163-residue polypeptide: Shikimate kinase (163 aa).

Residue 10–15 participates in ATP binding; the sequence is GVGKTT. Residue threonine 14 coordinates Mg(2+). Residues aspartate 28, arginine 52, and glycine 75 each coordinate substrate. ATP is bound at residue arginine 116. Arginine 134 provides a ligand contact to substrate.

The protein belongs to the shikimate kinase family. In terms of assembly, monomer. Requires Mg(2+) as cofactor.

It localises to the cytoplasm. The enzyme catalyses shikimate + ATP = 3-phosphoshikimate + ADP + H(+). The protein operates within metabolic intermediate biosynthesis; chorismate biosynthesis; chorismate from D-erythrose 4-phosphate and phosphoenolpyruvate: step 5/7. Functionally, catalyzes the specific phosphorylation of the 3-hydroxyl group of shikimic acid using ATP as a cosubstrate. In Streptococcus suis (strain 98HAH33), this protein is Shikimate kinase.